Here is a 901-residue protein sequence, read N- to C-terminus: Envelope glycoprotein B (901 aa).

Residues 1–34 (MRPVRGIARSRILSCSWRGTWTSALTILYLGVYC) form the signal peptide. Topologically, residues 35–736 (ESTTVTPTTV…GALVTFVTNP (702 aa)) are virion surface. 3 N-linked (GlcNAc...) asparagine; by host glycosylation sites follow: N53, N60, and N66. 4 cysteine pairs are disulfide-bonded: C84–C533, C101–C489, C174–C239, and C331–C380. The involved in fusion and/or binding to host membrane stretch occupies residues 141–147 (SYKYVTY). A glycan (N-linked (GlcNAc...) asparagine; by host) is linked at N197. An involved in fusion and/or binding to host membrane region spans residues 226–233 (GSVWLYKE). N270, N289, N328, N372, N398, N406, N436, N537, N571, and N623 each carry an N-linked (GlcNAc...) asparagine; by host glycan. An intrachain disulfide couples C559 to C596. 2 hydrophobic membrane proximal region regions span residues 683–734 (VERV…TFVT) and 714–734 (AVGAVGGAIGSFIGALVTFVT). Residues 737–757 (FGAFVVFLFCVGCITLVITVY) traverse the membrane as a helical segment. The Intravirion portion of the chain corresponds to 758–901 (RRQRRAMQRP…KLNTEDDVHV (144 aa)). Disordered regions lie at residues 794-813 (GPEGTSGDAPPPYPGEAPYG) and 852-901 (DDKK…DVHV). Composition is skewed to basic and acidic residues over residues 852–864 (DDKKRQEIEKSSK) and 872–883 (SETRRRPGIMDR). An Internalization motif motif is present at residues 890-893 (YQKL).

Belongs to the herpesviridae glycoprotein B family. Homotrimer; disulfide-linked. Binds to heparan sulfate proteoglycans. Interacts with gH/gL heterodimer. A proteolytic cleavage by host furin generates two subunits that remain linked by disulfide bonds.

The protein resides in the virion membrane. It localises to the host cell membrane. It is found in the host endosome membrane. Its subcellular location is the host Golgi apparatus membrane. In terms of biological role, envelope glycoprotein that forms spikes at the surface of virion envelope. Essential for the initial attachment to heparan sulfate moieties of the host cell surface proteoglycans. Involved in fusion of viral and cellular membranes leading to virus entry into the host cell. Following initial binding to its host receptors, membrane fusion is mediated by the fusion machinery composed at least of gB and the heterodimer gH/gL. May be involved in the fusion between the virion envelope and the outer nuclear membrane during virion egress. The sequence is that of Envelope glycoprotein B from Guinea pig cytomegalovirus (strain 22122) (GPCMV).